The following is a 509-amino-acid chain: 2,3-bisphosphoglycerate-independent phosphoglycerate mutase (509 aa).

2 residues coordinate Mn(2+): Asp12 and Ser62. Ser62 (phosphoserine intermediate) is an active-site residue. Residues His123, 153–154 (RD), Arg185, Arg191, 260–263 (RPDR), and Lys333 contribute to the substrate site. The Mn(2+) site is built by Asp400, His404, Asp441, His442, and His460.

It belongs to the BPG-independent phosphoglycerate mutase family. Monomer. Requires Mn(2+) as cofactor.

It catalyses the reaction (2R)-2-phosphoglycerate = (2R)-3-phosphoglycerate. The protein operates within carbohydrate degradation; glycolysis; pyruvate from D-glyceraldehyde 3-phosphate: step 3/5. Catalyzes the interconversion of 2-phosphoglycerate and 3-phosphoglycerate. This Clostridium botulinum (strain Langeland / NCTC 10281 / Type F) protein is 2,3-bisphosphoglycerate-independent phosphoglycerate mutase.